Consider the following 339-residue polypeptide: Casein kinase II subunit alpha' (339 aa).

Residues 50–334 (YEIINKIGRG…AKEAMDHKFF (285 aa)) enclose the Protein kinase domain. ATP is bound by residues 56 to 64 (IGRGKYSEV) and Lys-79. Asp-167 acts as the Proton acceptor in catalysis.

Belongs to the protein kinase superfamily. Ser/Thr protein kinase family. CK2 subfamily. As to quaternary structure, tetramer composed of an alpha chain, an alpha', one beta chain and one beta' chain. Interacts with FACT subunits POB3 and SPT16. Interacts with NAP1. Interacts with YTA7.

The catalysed reaction is L-seryl-[protein] + ATP = O-phospho-L-seryl-[protein] + ADP + H(+). The enzyme catalyses L-threonyl-[protein] + ATP = O-phospho-L-threonyl-[protein] + ADP + H(+). Its function is as follows. Catalytic subunit of a constitutively active serine/threonine-protein kinase complex that phosphorylates a large number of substrates containing acidic residues C-terminal to the phosphorylated serine or threonine. Phosphorylates YTA7 during S-phase to promote transcription of histones. The chain is Casein kinase II subunit alpha' from Saccharomyces cerevisiae (strain ATCC 204508 / S288c) (Baker's yeast).